We begin with the raw amino-acid sequence, 259 residues long: tRNA pseudouridine synthase A (259 aa).

The active-site Nucleophile is the aspartate 50. Tyrosine 101 is a substrate binding site.

The protein belongs to the tRNA pseudouridine synthase TruA family.

It carries out the reaction uridine(38/39/40) in tRNA = pseudouridine(38/39/40) in tRNA. In terms of biological role, formation of pseudouridine at positions 38, 39 and 40 in the anticodon stem and loop of transfer RNAs. The protein is tRNA pseudouridine synthase A of Methanocaldococcus jannaschii (strain ATCC 43067 / DSM 2661 / JAL-1 / JCM 10045 / NBRC 100440) (Methanococcus jannaschii).